A 68-amino-acid chain; its full sequence is DNA-directed RNA polymerase subunit Rpo10 (68 aa).

Positions 7, 10, 44, and 45 each coordinate Zn(2+).

This sequence belongs to the archaeal Rpo10/eukaryotic RPB10 RNA polymerase subunit family. In terms of assembly, part of the RNA polymerase complex. Zn(2+) serves as cofactor.

It localises to the cytoplasm. It carries out the reaction RNA(n) + a ribonucleoside 5'-triphosphate = RNA(n+1) + diphosphate. Its function is as follows. DNA-dependent RNA polymerase (RNAP) catalyzes the transcription of DNA into RNA using the four ribonucleoside triphosphates as substrates. The protein is DNA-directed RNA polymerase subunit Rpo10 of Methanococcus vannielii (strain ATCC 35089 / DSM 1224 / JCM 13029 / OCM 148 / SB).